Reading from the N-terminus, the 319-residue chain is Acetyl-coenzyme A carboxylase carboxyl transferase subunit alpha (319 aa).

The CoA carboxyltransferase C-terminal domain occupies 39–293; the sequence is RLQKKSNDLT…KAVLEKQLHE (255 aa).

It belongs to the AccA family. As to quaternary structure, acetyl-CoA carboxylase is a heterohexamer composed of biotin carboxyl carrier protein (AccB), biotin carboxylase (AccC) and two subunits each of ACCase subunit alpha (AccA) and ACCase subunit beta (AccD).

The protein resides in the cytoplasm. The enzyme catalyses N(6)-carboxybiotinyl-L-lysyl-[protein] + acetyl-CoA = N(6)-biotinyl-L-lysyl-[protein] + malonyl-CoA. It participates in lipid metabolism; malonyl-CoA biosynthesis; malonyl-CoA from acetyl-CoA: step 1/1. Its function is as follows. Component of the acetyl coenzyme A carboxylase (ACC) complex. First, biotin carboxylase catalyzes the carboxylation of biotin on its carrier protein (BCCP) and then the CO(2) group is transferred by the carboxyltransferase to acetyl-CoA to form malonyl-CoA. This Neisseria meningitidis serogroup A / serotype 4A (strain DSM 15465 / Z2491) protein is Acetyl-coenzyme A carboxylase carboxyl transferase subunit alpha.